The chain runs to 586 residues: Arginine--tRNA ligase (586 aa).

A 'HIGH' region motif is present at residues 131–141 (ANPTGPLHVGH).

Belongs to the class-I aminoacyl-tRNA synthetase family. Monomer.

It localises to the cytoplasm. The catalysed reaction is tRNA(Arg) + L-arginine + ATP = L-arginyl-tRNA(Arg) + AMP + diphosphate. The chain is Arginine--tRNA ligase from Nitrosomonas europaea (strain ATCC 19718 / CIP 103999 / KCTC 2705 / NBRC 14298).